The sequence spans 312 residues: Pre-mRNA-splicing factor 38A (312 aa).

Residues 1–179 (MANRTVKDAH…VLEEAEQLEP (179 aa)) are N-terminal protein interaction domain. 5 positions are modified to phosphoserine: serine 11, serine 193, serine 194, serine 209, and serine 226. The stretch at 170–204 (VLEEAEQLEPRVSALEEDMDDVESSEEEEEEDEKL) forms a coiled coil. The disordered stretch occupies residues 181–312 (VSALEEDMDD…SHKKSRRGNE (132 aa)). Acidic residues predominate over residues 184–202 (LEEDMDDVESSEEEEEEDE). The span at 203–224 (KLERVPSPDHRRRSYRDLDKPR) shows a compositional bias: basic and acidic residues. Composition is skewed to basic residues over residues 225-294 (RSPA…RSHS) and 301-312 (KKSHKKSRRGNE).

Belongs to the PRP38 family. As to quaternary structure, component of the spliceosome B complex. Interacts (via N-terminal interaction domain) with ZMAT2 and MFAP1.

It is found in the nucleus. Its function is as follows. Involved in pre-mRNA splicing as a component of the spliceosome. The sequence is that of Pre-mRNA-splicing factor 38A (Prpf38a) from Mus musculus (Mouse).